Here is a 141-residue protein sequence, read N- to C-terminus: Cell division protein SepF (141 aa).

The protein belongs to the SepF family. As to quaternary structure, homodimer. Interacts with FtsZ.

It localises to the cytoplasm. Cell division protein that is part of the divisome complex and is recruited early to the Z-ring. Probably stimulates Z-ring formation, perhaps through the cross-linking of FtsZ protofilaments. Its function overlaps with FtsA. The sequence is that of Cell division protein SepF from Anoxybacillus flavithermus (strain DSM 21510 / WK1).